Here is a 255-residue protein sequence, read N- to C-terminus: Thrombin-like enzyme batroxobin (255 aa).

A signal peptide spans 1–18 (MVLIRVIANLLILQVSYA). Positions 19–24 (QKSSEL) are excised as a propeptide. One can recognise a Peptidase S1 domain in the interval 25–247 (VIGGDECDIN…YLPWIQSIIA (223 aa)). Cystine bridges form between C31/C163, C50/C66, C98/C254, C142/C208, C174/C187, and C198/C223. Active-site charge relay system residues include H65 and D110. N170 carries an N-linked (GlcNAc...) asparagine glycan. The active-site Charge relay system is the S202. A glycan (N-linked (GlcNAc...) asparagine) is linked at N249.

It belongs to the peptidase S1 family. Snake venom subfamily. In terms of assembly, monomer. Expressed by the venom gland.

It is found in the secreted. The enzyme catalyses Selective cleavage of Arg-|-Xaa bond in fibrinogen, to form fibrin, and release fibrinopeptide A. The specificity of further degradation of fibrinogen varies with species origin of the enzyme.. Functionally, thrombin-like snake venom serine protease. Cleaves Arg-Gly bonds in fibrinogen alpha chains (FGA). The sequence is that of Thrombin-like enzyme batroxobin from Bothrops atrox (Barba amarilla).